The chain runs to 80 residues: Protein UL148B (80 aa).

Residues 10-30 form a helical membrane-spanning segment; the sequence is AICVGLVMGVTVIASCALLVF.

Its subcellular location is the host membrane. The protein is Protein UL148B (UL148B) of Homo sapiens (Human).